The chain runs to 178 residues: uncharacterized protein (178 aa).

A signal peptide spans 1–20; it reads MKKLLVASLALLILTPVALA.

This is an uncharacterized protein from Archaeoglobus fulgidus (strain ATCC 49558 / DSM 4304 / JCM 9628 / NBRC 100126 / VC-16).